We begin with the raw amino-acid sequence, 396 residues long: 8-amino-7-oxononanoate synthase (396 aa).

Residue Arg-19 coordinates substrate. 106 to 107 (GY) is a binding site for pyridoxal 5'-phosphate. His-131 is a binding site for substrate. 3 residues coordinate pyridoxal 5'-phosphate: Ser-176, His-204, and Thr-233. Lys-236 is subject to N6-(pyridoxal phosphate)lysine. Thr-350 is a binding site for substrate.

Belongs to the class-II pyridoxal-phosphate-dependent aminotransferase family. BioF subfamily. In terms of assembly, homodimer. Requires pyridoxal 5'-phosphate as cofactor.

It catalyses the reaction 6-carboxyhexanoyl-[ACP] + L-alanine + H(+) = (8S)-8-amino-7-oxononanoate + holo-[ACP] + CO2. It functions in the pathway cofactor biosynthesis; biotin biosynthesis. In terms of biological role, catalyzes the decarboxylative condensation of pimeloyl-[acyl-carrier protein] and L-alanine to produce 8-amino-7-oxononanoate (AON), [acyl-carrier protein], and carbon dioxide. This is 8-amino-7-oxononanoate synthase from Pseudomonas syringae pv. tomato (strain ATCC BAA-871 / DC3000).